We begin with the raw amino-acid sequence, 208 residues long: 3-isopropylmalate dehydratase small subunit (208 aa).

The protein belongs to the LeuD family. LeuD type 1 subfamily. In terms of assembly, heterodimer of LeuC and LeuD.

The catalysed reaction is (2R,3S)-3-isopropylmalate = (2S)-2-isopropylmalate. Its pathway is amino-acid biosynthesis; L-leucine biosynthesis; L-leucine from 3-methyl-2-oxobutanoate: step 2/4. Functionally, catalyzes the isomerization between 2-isopropylmalate and 3-isopropylmalate, via the formation of 2-isopropylmaleate. The chain is 3-isopropylmalate dehydratase small subunit from Gluconobacter oxydans (strain 621H) (Gluconobacter suboxydans).